The primary structure comprises 120 residues: Internal scaffolding protein B (120 aa).

Residues 1 to 23 are compositionally biased toward polar residues; it reads MEQLTKNQAVATSQEAVQNQNEP. Residues 1 to 64 form a disordered region; sequence MEQLTKNQAV…PDIEAERKKR (64 aa). 2 stretches are compositionally biased toward basic and acidic residues: residues 24–36 and 48–64; these read QLRD…DKSV and LRRD…RKKR.

The protein belongs to the microviridae B protein family. In terms of assembly, component of the procapsid complex composed of 60 copies of the internally located B, 240 copies of the external scaffolding protein D, 60 copies of each of the viral structural proteins F and G proteins, and 12 copies of H. Post-translationally, the proteolytic cleavage of the internal scaffolding protein B releases the scaffold protein in order to continue virion assembly.

Its subcellular location is the host cytoplasm. Participates in the assembly of the viral procapsid in the cytoplasm. Forms first a 12S pre-assembly complex with protein H, and F and G pentamers, then twelve 12S complexes are joined by the D protein to form the procapsid. Internal scaffold protein B is released from the procapsid upon genome packaging. Autoproteolytic activity cleaves protein B and probably facilitates its removal through the pores of the procapsid. This chain is Internal scaffolding protein B (B), found in Enterobacteria phage phiX174 (Isolate Sanger).